The chain runs to 412 residues: Mitochondrial distribution and morphology protein 12 (412 aa).

The region spanning 1-410 (MSIDLEWAKL…FPNFHTLVMG (410 aa)) is the SMP-LTD domain. 4 disordered regions span residues 66 to 96 (EDDE…DGYE), 108 to 136 (YTEG…SPTD), 166 to 238 (QGSG…QQEN), and 314 to 354 (PAGD…KPLP). A compositionally biased stretch (low complexity) spans 220–238 (NQPVFPSQQPQQQQPQQEN).

Belongs to the MDM12 family. In terms of assembly, component of the ER-mitochondria encounter structure (ERMES) or MDM complex, composed of MMM1, MDM10, MDM12 and MDM34. An MMM1 homodimer associates with one molecule of MDM12 on each side in a pairwise head-to-tail manner, and the SMP-LTD domains of MMM1 and MDM12 generate a continuous hydrophobic tunnel for phospholipid trafficking.

Its subcellular location is the mitochondrion outer membrane. It is found in the endoplasmic reticulum membrane. Functionally, component of the ERMES/MDM complex, which serves as a molecular tether to connect the endoplasmic reticulum (ER) and mitochondria. Components of this complex are involved in the control of mitochondrial shape and protein biogenesis, and function in nonvesicular lipid trafficking between the ER and mitochondria. MDM12 is required for the interaction of the ER-resident membrane protein MMM1 and the outer mitochondrial membrane-resident beta-barrel protein MDM10. The MDM12-MMM1 subcomplex functions in the major beta-barrel assembly pathway that is responsible for biogenesis of all mitochondrial outer membrane beta-barrel proteins, and acts in a late step after the SAM complex. The MDM10-MDM12-MMM1 subcomplex further acts in the TOM40-specific pathway after the action of the MDM12-MMM1 complex. Essential for establishing and maintaining the structure of mitochondria and maintenance of mtDNA nucleoids. This chain is Mitochondrial distribution and morphology protein 12, found in Coprinopsis cinerea (strain Okayama-7 / 130 / ATCC MYA-4618 / FGSC 9003) (Inky cap fungus).